We begin with the raw amino-acid sequence, 75 residues long: Veswaprin-c (75 aa).

A signal peptide spans M1–S24. The region spanning R27 to I72 is the WAP domain. Intrachain disulfides connect C34-C60, C43-C64, C47-C59, and C53-C68.

Belongs to the venom waprin family. In terms of tissue distribution, expressed by the venom gland.

Its subcellular location is the secreted. In terms of biological role, damages membranes of susceptible bacteria. Has no hemolytic activity. Not toxic to mice. Does not inhibit the proteinases elastase and cathepsin G. This chain is Veswaprin-c, found in Demansia vestigiata (Lesser black whip snake).